Reading from the N-terminus, the 239-residue chain is MAMLRTDLEFSMLPKLGTRPVRWRIADGLVAYEAAVEMMEREVAAIGEGGDELVWLVEHPPLYTAGTSANASDLVQPDRFPVFATGRGGEYTYHGPGQRVAYVMLDLKRRRQDVRAFVAALEEVVIRTLDMMNVRGERREDRVGVWVRRPEKPLLPDGTMAEDKIAALGIRLRKWVTFHGLSLNVDPDLDHFSGIVPCGISTYGVTSLVDLGLPVMMADVDIRLRAAFETVFGETTNDA.

Residues 48–236 (EGGDELVWLV…AFETVFGETT (189 aa)) form the BPL/LPL catalytic domain. Substrate is bound by residues 87–94 (RGGEYTYH), 167–169 (ALG), and 180–182 (GLS). The Acyl-thioester intermediate role is filled by Cys-198.

Belongs to the LipB family.

The protein resides in the cytoplasm. It carries out the reaction octanoyl-[ACP] + L-lysyl-[protein] = N(6)-octanoyl-L-lysyl-[protein] + holo-[ACP] + H(+). It functions in the pathway protein modification; protein lipoylation via endogenous pathway; protein N(6)-(lipoyl)lysine from octanoyl-[acyl-carrier-protein]: step 1/2. Functionally, catalyzes the transfer of endogenously produced octanoic acid from octanoyl-acyl-carrier-protein onto the lipoyl domains of lipoate-dependent enzymes. Lipoyl-ACP can also act as a substrate although octanoyl-ACP is likely to be the physiological substrate. The protein is Octanoyltransferase of Rhizobium etli (strain ATCC 51251 / DSM 11541 / JCM 21823 / NBRC 15573 / CFN 42).